We begin with the raw amino-acid sequence, 244 residues long: Large ribosomal subunit protein uL30w (244 aa).

The protein belongs to the universal ribosomal protein uL30 family.

The chain is Large ribosomal subunit protein uL30w (RPL7D) from Arabidopsis thaliana (Mouse-ear cress).